We begin with the raw amino-acid sequence, 121 residues long: Large ribosomal subunit protein uL18 (121 aa).

The protein belongs to the universal ribosomal protein uL18 family. In terms of assembly, part of the 50S ribosomal subunit; part of the 5S rRNA/L5/L18/L25 subcomplex. Contacts the 5S and 23S rRNAs.

This is one of the proteins that bind and probably mediate the attachment of the 5S RNA into the large ribosomal subunit, where it forms part of the central protuberance. This Ehrlichia canis (strain Jake) protein is Large ribosomal subunit protein uL18.